Consider the following 401-residue polypeptide: 1-deoxy-D-xylulose 5-phosphate reductoisomerase (401 aa).

Residues Thr10, Gly11, Ser12, Ile13, Gly36, Arg37, Asn38, and Asn124 each coordinate NADPH. Lys125 provides a ligand contact to 1-deoxy-D-xylulose 5-phosphate. NADPH is bound at residue Glu126. Asp150 contacts Mn(2+). Residues Ser151, Glu152, Ser176, and His199 each contribute to the 1-deoxy-D-xylulose 5-phosphate site. Residue Glu152 coordinates Mn(2+). Residue Gly205 coordinates NADPH. Positions 212, 217, 218, and 221 each coordinate 1-deoxy-D-xylulose 5-phosphate. Residue Glu221 participates in Mn(2+) binding.

It belongs to the DXR family. Requires Mg(2+) as cofactor. Mn(2+) serves as cofactor.

The catalysed reaction is 2-C-methyl-D-erythritol 4-phosphate + NADP(+) = 1-deoxy-D-xylulose 5-phosphate + NADPH + H(+). It functions in the pathway isoprenoid biosynthesis; isopentenyl diphosphate biosynthesis via DXP pathway; isopentenyl diphosphate from 1-deoxy-D-xylulose 5-phosphate: step 1/6. In terms of biological role, catalyzes the NADPH-dependent rearrangement and reduction of 1-deoxy-D-xylulose-5-phosphate (DXP) to 2-C-methyl-D-erythritol 4-phosphate (MEP). The protein is 1-deoxy-D-xylulose 5-phosphate reductoisomerase of Acaryochloris marina (strain MBIC 11017).